We begin with the raw amino-acid sequence, 150 residues long: Small ribosomal subunit protein uS11 (150 aa).

Positions glycine 126–leucine 150 are disordered. The span at arginine 141–leucine 150 shows a compositional bias: basic residues.

The protein belongs to the universal ribosomal protein uS11 family. In terms of assembly, component of the small ribosomal subunit (SSU). Mature N.crassa ribosomes consist of a small (40S) and a large (60S) subunit. The 40S small subunit contains 1 molecule of ribosomal RNA (18S rRNA) and at least 32 different proteins. The large 60S subunit contains 3 rRNA molecules (26S, 5.8S and 5S rRNA) and at least 42 different proteins.

It localises to the cytoplasm. In terms of biological role, component of the ribosome, a large ribonucleoprotein complex responsible for the synthesis of proteins in the cell. The small ribosomal subunit (SSU) binds messenger RNAs (mRNAs) and translates the encoded message by selecting cognate aminoacyl-transfer RNA (tRNA) molecules. The large subunit (LSU) contains the ribosomal catalytic site termed the peptidyl transferase center (PTC), which catalyzes the formation of peptide bonds, thereby polymerizing the amino acids delivered by tRNAs into a polypeptide chain. The nascent polypeptides leave the ribosome through a tunnel in the LSU and interact with protein factors that function in enzymatic processing, targeting, and the membrane insertion of nascent chains at the exit of the ribosomal tunnel. uS11 is involved in nucleolar processing of pre-18S ribosomal RNA and ribosome assembly. The polypeptide is Small ribosomal subunit protein uS11 (rps-14) (Neurospora crassa (strain ATCC 24698 / 74-OR23-1A / CBS 708.71 / DSM 1257 / FGSC 987)).